A 380-amino-acid polypeptide reads, in one-letter code: Large ribosomal subunit protein mL38 (380 aa).

Residues methionine 1–serine 26 constitute a mitochondrion transit peptide. Positions serine 98–alanine 123 form a coiled coil.

The protein belongs to the phosphatidylethanolamine-binding protein family. Mitochondrion-specific ribosomal protein mL38 subfamily. Component of the mitochondrial ribosome large subunit (39S) which comprises a 16S rRNA and about 50 distinct proteins.

The protein resides in the mitochondrion. The sequence is that of Large ribosomal subunit protein mL38 (Mrpl38) from Rattus norvegicus (Rat).